A 212-amino-acid polypeptide reads, in one-letter code: Fe/S biogenesis protein NfuA (212 aa).

[4Fe-4S] cluster is bound by residues cysteine 169 and cysteine 172.

This sequence belongs to the NfuA family. In terms of assembly, homodimer. [4Fe-4S] cluster serves as cofactor.

Functionally, involved in iron-sulfur cluster biogenesis. Binds a 4Fe-4S cluster, can transfer this cluster to apoproteins, and thereby intervenes in the maturation of Fe/S proteins. Could also act as a scaffold/chaperone for damaged Fe/S proteins. In Acinetobacter baumannii (strain AB307-0294), this protein is Fe/S biogenesis protein NfuA.